Reading from the N-terminus, the 106-residue chain is Small ribosomal subunit protein uS10 (106 aa).

The protein belongs to the universal ribosomal protein uS10 family. In terms of assembly, part of the 30S ribosomal subunit.

Its function is as follows. Involved in the binding of tRNA to the ribosomes. The polypeptide is Small ribosomal subunit protein uS10 (Pyrobaculum arsenaticum (strain DSM 13514 / JCM 11321 / PZ6)).